The following is a 156-amino-acid chain: SsrA-binding protein (156 aa).

Belongs to the SmpB family.

It localises to the cytoplasm. Required for rescue of stalled ribosomes mediated by trans-translation. Binds to transfer-messenger RNA (tmRNA), required for stable association of tmRNA with ribosomes. tmRNA and SmpB together mimic tRNA shape, replacing the anticodon stem-loop with SmpB. tmRNA is encoded by the ssrA gene; the 2 termini fold to resemble tRNA(Ala) and it encodes a 'tag peptide', a short internal open reading frame. During trans-translation Ala-aminoacylated tmRNA acts like a tRNA, entering the A-site of stalled ribosomes, displacing the stalled mRNA. The ribosome then switches to translate the ORF on the tmRNA; the nascent peptide is terminated with the 'tag peptide' encoded by the tmRNA and targeted for degradation. The ribosome is freed to recommence translation, which seems to be the essential function of trans-translation. The protein is SsrA-binding protein of Trichodesmium erythraeum (strain IMS101).